A 643-amino-acid chain; its full sequence is Protein RTF1 homolog (643 aa).

Disordered regions lie at residues 1 to 107 (MGDL…YKNE) and 124 to 262 (ILSE…SDVP). Residue glycine 2 is modified to N-acetylglycine. Residues 65–77 (KRLEAEREDRAAR) are compositionally biased toward basic and acidic residues. A Phosphoserine modification is found at serine 87. The segment covering 124 to 157 (ILSERADKKGDKNFTEKLRSKRESEKTPVSKKET) has biased composition (basic and acidic residues). The span at 162-171 (ASRGVRSSAR) shows a compositional bias: low complexity. A compositionally biased stretch (basic and acidic residues) spans 172–188 (SADRAAAKDDALNELRA). A compositionally biased stretch (low complexity) spans 225 to 235 (SSNLSSSSQSD). The Plus3 domain maps to 261–396 (VPTFEDVKEV…KKEAIQRTNS (136 aa)).

In terms of assembly, component of the nuclear PAF1 complex (PAF1C), which consists of VIP2/ELF7/PAF1, VIP3/SKI8/WDR61, VIP4/LEO1, VIP5/RTF1, VIP6/ELF8/CTR9 and CDC73.

Its subcellular location is the nucleus. Functionally, component of the PAF1 complex (PAF1C) which is involved in histone modifications such as methylation on histone H3 'Lys-4' (H3K4me3). Involved in regulation of flowering time. Required for the expression of the flowering repressors and FLC and MADS-box genes of the MAF family. Involved in the control of seed dormancy and germination. The protein is Protein RTF1 homolog of Arabidopsis thaliana (Mouse-ear cress).